A 468-amino-acid chain; its full sequence is METFANGMTLDVTVDALAPGGKAVCRHEGRVIFVDRGLPGQQLHVRLTTVRKRFAEAECLAVVTHTADECDPFCPHFGDCGGCTWQNLPYPAQLAWKERFVRDSLQRIGRIEAPNVLPTLPSPLQQGFRNKMEFAFTTDDREMLHLGLRRRGGHEVVDVTSCGLQTATTCRVVTTARDIARASGLPGWDDAAHRGFWRFLVVREPARGGQCLVQCITAPHPEAEHVARAFFTALRQAVPEVTGCVHSIRSQNSQVAYGDATVFTEGEIVLTEKLGAIELDFGHDTFLQTNTRATELLYGEVERMAGLSGREHVWDLYCGVGSIALWLAEHAATICGMEATPASVEAAQRNAQAAGCTHCDFVAGDVRALLRSRSKGKAQEPIPDVVVTDPPRAGMHPDVIDALLQTAPARIVYVSCDPATMARDVGLLMQRYTLHEARPVDLFPHTPHVETVVLLSNKEVDDTISTTV.

In terms of domain architecture, TRAM spans 3 to 61; that stretch reads TFANGMTLDVTVDALAPGGKAVCRHEGRVIFVDRGLPGQQLHVRLTTVRKRFAEAECLA. [4Fe-4S] cluster contacts are provided by Cys74, Cys80, Cys83, and Cys162. Gln288, Tyr317, Glu338, and Asp389 together coordinate S-adenosyl-L-methionine. Cys416 functions as the Nucleophile in the catalytic mechanism.

It belongs to the class I-like SAM-binding methyltransferase superfamily. RNA M5U methyltransferase family.

This is an uncharacterized protein from Nitratidesulfovibrio vulgaris (strain ATCC 29579 / DSM 644 / CCUG 34227 / NCIMB 8303 / VKM B-1760 / Hildenborough) (Desulfovibrio vulgaris).